Reading from the N-terminus, the 280-residue chain is uncharacterized protein (280 aa).

The 113-residue stretch at 96-208 (DKSIGIFQRF…GYLSTPPPVK (113 aa)) folds into the DUF1279 domain. The helical transmembrane segment at 115 to 135 (VMVPVHIVTSTVWFGSFYYAA) threads the bilayer. A coiled-coil region spans residues 207–274 (VKEFLQDKME…KLQETKDKMS (68 aa)). The disordered stretch occupies residues 245 to 280 (SERMEETKERFSETKDKFSEKLQETKDKMSFRKKAD).

The protein localises to the membrane. This is an uncharacterized protein from Danio rerio (Zebrafish).